We begin with the raw amino-acid sequence, 63 residues long: Large ribosomal subunit protein uL30 (63 aa).

The protein belongs to the universal ribosomal protein uL30 family. Part of the 50S ribosomal subunit.

This is Large ribosomal subunit protein uL30 from Bradyrhizobium sp. (strain ORS 278).